A 398-amino-acid chain; its full sequence is Nuclear egress protein 2 (398 aa).

At 1–359 the chain is on the perinuclear space side; that stretch reads MEMNKVLHQD…GPSRPQSGPW (359 aa). Disordered stretches follow at residues 202-246 and 306-334; these read ALTR…PPPP and LEEH…SLER. Pro residues predominate over residues 215-224; it reads ASPPPPPPRH. Serine 216 is modified (phosphoserine). Positions 225–240 are enriched in low complexity; it reads PSCSPTMVAAGGAAAG. Residues 311–323 show a composition bias toward basic residues; it reads SRRRGVSTHHRHP. The helical transmembrane segment at 360–382 threads the bilayer; that stretch reads LPARFATLGPLVLALLLVLALLW. Over 383–398 the chain is Nuclear; sequence RGHGQSSSPTRSAHRD.

This sequence belongs to the herpesviridae NEC2 protein family. In terms of assembly, forms a heterohexameric complex with NEC1. Interacts with host UBA7 and RNF170; this interaction promotes UBA7 proteasomal degradation. Phosphorylated. Phosphorylation by viral kinase UL97 at Ser-216 plays an important role for correct viral nuclear egress complex (NEC) localization.

The protein resides in the host nucleus inner membrane. Its function is as follows. Plays an essential role in virion nuclear egress, the first step of virion release from infected cell. Within the host nucleus, NEC1 interacts with the newly formed capsid through the vertexes and directs it to the inner nuclear membrane by associating with NEC2. Induces the budding of the capsid at the inner nuclear membrane as well as its envelopment into the perinuclear space. There, the NEC1/NEC2 complex promotes the fusion of the enveloped capsid with the outer nuclear membrane and the subsequent release of the viral capsid into the cytoplasm where it will reach the secondary budding sites in the host Golgi or trans-Golgi network. Inhibits host ISGylation and subsequent innate antiviral response by targeting host UBA7 for proteasomal degradation. The protein is Nuclear egress protein 2 of Homo sapiens (Human).